Reading from the N-terminus, the 227-residue chain is ATP-dependent dethiobiotin synthetase BioD (227 aa).

Residue 13–18 (NIGKTV) participates in ATP binding. Thr-17 contributes to the Mg(2+) binding site. The active site involves Lys-38. ATP is bound by residues Asp-55 and 116-119 (EGIG). Positions 55 and 116 each coordinate Mg(2+).

This sequence belongs to the dethiobiotin synthetase family. In terms of assembly, homodimer. Mg(2+) is required as a cofactor.

It is found in the cytoplasm. It catalyses the reaction (7R,8S)-7,8-diammoniononanoate + CO2 + ATP = (4R,5S)-dethiobiotin + ADP + phosphate + 3 H(+). Its pathway is cofactor biosynthesis; biotin biosynthesis; biotin from 7,8-diaminononanoate: step 1/2. Catalyzes a mechanistically unusual reaction, the ATP-dependent insertion of CO2 between the N7 and N8 nitrogen atoms of 7,8-diaminopelargonic acid (DAPA, also called 7,8-diammoniononanoate) to form a ureido ring. This chain is ATP-dependent dethiobiotin synthetase BioD, found in Buchnera aphidicola subsp. Baizongia pistaciae (strain Bp).